We begin with the raw amino-acid sequence, 71 residues long: MIFKVFYQETIDEVPVREKTKTLYIEAESERDVRRKLQDRHINIEYIQPLEGAHLAYEQQNPDFHVLEIEQ.

The protein belongs to the RNA polymerase subunit epsilon family. In terms of assembly, RNAP is composed of a core of 2 alpha, a beta and a beta' subunit. The core is associated with a delta subunit, and at least one of epsilon or omega. When a sigma factor is associated with the core the holoenzyme is formed, which can initiate transcription.

The enzyme catalyses RNA(n) + a ribonucleoside 5'-triphosphate = RNA(n+1) + diphosphate. Functionally, a non-essential component of RNA polymerase (RNAP). The polypeptide is DNA-directed RNA polymerase subunit epsilon (Anoxybacillus flavithermus (strain DSM 21510 / WK1)).